A 294-amino-acid chain; its full sequence is tRNA pseudouridine synthase B (294 aa).

The Nucleophile role is filled by aspartate 38.

It belongs to the pseudouridine synthase TruB family. Type 1 subfamily.

It catalyses the reaction uridine(55) in tRNA = pseudouridine(55) in tRNA. Functionally, responsible for synthesis of pseudouridine from uracil-55 in the psi GC loop of transfer RNAs. The sequence is that of tRNA pseudouridine synthase B from Clostridium perfringens (strain 13 / Type A).